Here is a 192-residue protein sequence, read N- to C-terminus: uncharacterized protein (192 aa).

The Nudix hydrolase domain maps to 29–160 (HRQAAVLIPI…PLDIYRRGDS (132 aa)). The Nudix box signature appears at 67–89 (GAVDDTDTSVIAAALREAEEEVA). Mg(2+) contacts are provided by Glu83 and Glu87.

Belongs to the Nudix hydrolase family. PCD1 subfamily. Mn(2+) is required as a cofactor. It depends on Mg(2+) as a cofactor.

Functionally, probably mediates the hydrolysis of some nucleoside diphosphate derivatives. This is an uncharacterized protein from Escherichia coli O6:H1 (strain CFT073 / ATCC 700928 / UPEC).